Reading from the N-terminus, the 139-residue chain is MLVPRRVKWRKSHAPKRKGFAKGGTRINFGEYGIQAIEHGYVTNRQIESARIAITRHVKRGGKVWINIFPDRPLTKKPAETRQGSGKGSPESWVANVKPGRVMFELNFPNEKTAIEALTRAAHKLPMKCKIVSREAGDF.

The interval L74–V94 is disordered.

It belongs to the universal ribosomal protein uL16 family. In terms of assembly, part of the 50S ribosomal subunit.

Its function is as follows. Binds 23S rRNA and is also seen to make contacts with the A and possibly P site tRNAs. This Saccharopolyspora erythraea (strain ATCC 11635 / DSM 40517 / JCM 4748 / NBRC 13426 / NCIMB 8594 / NRRL 2338) protein is Large ribosomal subunit protein uL16.